A 748-amino-acid chain; its full sequence is 5-methyltetrahydropteroyltriglutamate--homocysteine methyltransferase (748 aa).

Residues 18–21 (REWK) and lysine 112 contribute to the 5-methyltetrahydropteroyltri-L-glutamate site. L-homocysteine is bound by residues 420–422 (IGS) and glutamate 473. L-methionine contacts are provided by residues 420-422 (IGS) and glutamate 473. Tryptophan 550 contacts 5-methyltetrahydropteroyltri-L-glutamate. Residue aspartate 588 participates in L-homocysteine binding. Aspartate 588 provides a ligand contact to L-methionine. Position 594 (glutamate 594) interacts with 5-methyltetrahydropteroyltri-L-glutamate. Zn(2+)-binding residues include histidine 630, cysteine 632, and glutamate 654. Histidine 683 acts as the Proton donor in catalysis. A Zn(2+)-binding site is contributed by cysteine 715.

The protein belongs to the vitamin-B12 independent methionine synthase family. The cofactor is Zn(2+).

It carries out the reaction 5-methyltetrahydropteroyltri-L-glutamate + L-homocysteine = tetrahydropteroyltri-L-glutamate + L-methionine. Its pathway is amino-acid biosynthesis; L-methionine biosynthesis via de novo pathway; L-methionine from L-homocysteine (MetE route): step 1/1. Its function is as follows. Catalyzes the transfer of a methyl group from 5-methyltetrahydrofolate to homocysteine resulting in methionine formation. This chain is 5-methyltetrahydropteroyltriglutamate--homocysteine methyltransferase, found in Staphylococcus epidermidis (strain ATCC 35984 / DSM 28319 / BCRC 17069 / CCUG 31568 / BM 3577 / RP62A).